A 157-amino-acid polypeptide reads, in one-letter code: Small ribosomal subunit protein uS7 (157 aa).

This sequence belongs to the universal ribosomal protein uS7 family. In terms of assembly, part of the 30S ribosomal subunit. Contacts proteins S9 and S11.

Functionally, one of the primary rRNA binding proteins, it binds directly to 16S rRNA where it nucleates assembly of the head domain of the 30S subunit. Is located at the subunit interface close to the decoding center, probably blocks exit of the E-site tRNA. The chain is Small ribosomal subunit protein uS7 from Francisella philomiragia subsp. philomiragia (strain ATCC 25017 / CCUG 19701 / FSC 153 / O#319-036).